The following is a 262-amino-acid chain: ATP synthase subunit a (262 aa).

Transmembrane regions (helical) follow at residues 24 to 44, 84 to 104, 129 to 149, 194 to 214, and 228 to 248; these read AVHL…LFVF, VIAP…AIDL, DISA…FYTV, LFGN…MYMA, and LVWA…FMML.

Belongs to the ATPase A chain family. F-type ATPases have 2 components, CF(1) - the catalytic core - and CF(0) - the membrane proton channel. CF(1) has five subunits: alpha(3), beta(3), gamma(1), delta(1), epsilon(1). CF(0) has three main subunits: a(1), b(2) and c(9-12). The alpha and beta chains form an alternating ring which encloses part of the gamma chain. CF(1) is attached to CF(0) by a central stalk formed by the gamma and epsilon chains, while a peripheral stalk is formed by the delta and b chains.

Its subcellular location is the cell inner membrane. In terms of biological role, key component of the proton channel; it plays a direct role in the translocation of protons across the membrane. In Actinobacillus pleuropneumoniae serotype 3 (strain JL03), this protein is ATP synthase subunit a.